The following is a 597-amino-acid chain: MSGPSSGCGFLMSVVVHGDLALNEQEKELNQRLRRLYPAVNEQETPLPRSWSPKDKFSYIGLSQNNLRVHYKGHGKTPKDAASVRATHPIPAACGVYYFEVKIISKGRDGYMGIGLSAQGVNMNRLPGWDKHSYGYHGDDGHSFCSSGTGQPYGPTFTTGDVIGCCVNLINNTCFYTKNGHSLGIAFTDLPPNLYPTVGLQTPGEVVDANFGQHPFVFDIEDYMREWRTKIQSQIDRFPIGEREGEWQAMIQKMVASYLVHHSYCATAEAFAKSTDQAVHEELASIKNRQKIQKLVLSGRMGEAIETTQQLYPSLLERNPDLLFMLKVRQFIEMVNGTDSEVRCLGGRSPKSQDSYPGSPRLFNSPVHKPSSSQAYQTGFDSNYCNGVSSSKGHTSAHSHKSCPPTLSSPELGVLNGSRGQQTIVSSEVEMEVDHFSNGVSESSSNGFLNGSSTHGTEQEDCDADMEVDSTQSKRQLCGGSQAAIERMIQFGRELQSMSEHLRRERGKNSANKKMLKDAFSLLAYSDPWNSPVGYQLDSIQREPVCSTLNSAILETHNLPKQPPLALAMGQAAQCLSLMARTGSGSCAFASVDDYLH.

One can recognise a B30.2/SPRY domain in the interval 29–216 (LNQRLRRLYP…VDANFGQHPF (188 aa)). In terms of domain architecture, LisH spans 247-279 (WQAMIQKMVASYLVHHSYCATAEAFAKSTDQAV). The CTLH domain maps to 285-342 (SIKNRQKIQKLVLSGRMGEAIETTQQLYPSLLERNPDLLFMLKVRQFIEMVNGTDSEV). Disordered stretches follow at residues 343 to 375 (RCLGGRSPKSQDSYPGSPRLFNSPVHKPSSSQA), 389 to 417 (SSSKGHTSAHSHKSCPPTLSSPELGVLNG), and 437 to 475 (SNGVSESSSNGFLNGSSTHGTEQEDCDADMEVDSTQSKR). The span at 438–456 (NGVSESSSNGFLNGSSTHG) shows a compositional bias: polar residues. The span at 459–468 (QEDCDADMEV) shows a compositional bias: acidic residues.

It belongs to the RANBP9/10 family. In terms of assembly, identified in the CTLH complex that contains at least MAEA, RMND5A (or alternatively its paralog RMND5B), GID8, WDR26, and RANBP9 and/or RANBP10.

It is found in the cytoplasm. Its subcellular location is the cell membrane. It localises to the nucleus. Functionally, may act as scaffolding protein, and as adapter protein to couple membrane receptors to intracellular signaling pathways. Acts as a mediator of cell spreading and actin cytoskeleton rearrangement. Core component of the CTLH E3 ubiquitin-protein ligase complex that mediates ubiquitination and subsequent proteasomal degradation of target proteins. In Danio rerio (Zebrafish), this protein is Ran-binding protein 9 (ranbp9).